Consider the following 222-residue polypeptide: DNA mismatch repair protein MutH (222 aa).

Belongs to the MutH family.

It localises to the cytoplasm. In terms of biological role, sequence-specific endonuclease that cleaves unmethylated GATC sequences. It is involved in DNA mismatch repair. The chain is DNA mismatch repair protein MutH from Pasteurella multocida (strain Pm70).